The sequence spans 163 residues: Ribosome maturation factor RimP (163 aa).

The protein belongs to the RimP family.

It is found in the cytoplasm. Its function is as follows. Required for maturation of 30S ribosomal subunits. The protein is Ribosome maturation factor RimP of Streptococcus thermophilus (strain CNRZ 1066).